Here is a 78-residue protein sequence, read N- to C-terminus: D-alanyl carrier protein (78 aa).

The region spanning Met-1–Lys-78 is the Carrier domain. An O-(pantetheine 4'-phosphoryl)serine modification is found at Ser-36.

This sequence belongs to the DltC family. 4'-phosphopantetheine is transferred from CoA to a specific serine of apo-DCP.

It localises to the cytoplasm. It participates in cell wall biogenesis; lipoteichoic acid biosynthesis. Carrier protein involved in the D-alanylation of lipoteichoic acid (LTA). The loading of thioester-linked D-alanine onto DltC is catalyzed by D-alanine--D-alanyl carrier protein ligase DltA. The DltC-carried D-alanyl group is further transferred to cell membrane phosphatidylglycerol (PG) by forming an ester bond, probably catalyzed by DltD. D-alanylation of LTA plays an important role in modulating the properties of the cell wall in Gram-positive bacteria, influencing the net charge of the cell wall. The polypeptide is D-alanyl carrier protein (Bacillus subtilis (strain 168)).